A 415-amino-acid polypeptide reads, in one-letter code: Transcription factor gsfR2 (415 aa).

The segment at residues 9–36 (CITCVQSKRKCDQGLPKCQRCLAKNIHC) is a DNA-binding region (zn(2)-C6 fungal-type). A disordered region spans residues 65–91 (AEEPSRGCQLQRSPARPTSPTHSPHAN). The span at 72–88 (CQLQRSPARPTSPTHSP) shows a compositional bias: polar residues.

The protein resides in the nucleus. Transcription factor that regulates expression of the gene cluster that mediates the biosynthesis of Griseofulvin, an important antifungal drug that has been in use for a long time for treating dermatophyte infections. The protein is Transcription factor gsfR2 of Penicillium aethiopicum.